A 166-amino-acid polypeptide reads, in one-letter code: Thioredoxin, mitochondrial (166 aa).

A mitochondrion-targeting transit peptide spans 1 to 59 (MAQRLLLRRFLTSIISGKPSQSRWAPVASRALQTPQYSPGYLTVTPSQARSIYTTRVCS). The Thioredoxin domain occupies 61–166 (TFNIQDGPDF…LEAFLKKLIG (106 aa)). Catalysis depends on nucleophile residues Cys-90 and Cys-93. An intrachain disulfide couples Cys-90 to Cys-93. Lys-152 carries the post-translational modification N6-acetyllysine; alternate. Lys-152 is modified (N6-succinyllysine; alternate).

Belongs to the thioredoxin family. In terms of assembly, monomer.

The protein localises to the mitochondrion. Its function is as follows. Important for the control of mitochondrial reactive oxygen species homeostasis, apoptosis regulation and cell viability. Is involved in various redox reactions including the reduction of protein disulfide bonds, through the reversible oxidation of its active center dithiol to a disulfide. The polypeptide is Thioredoxin, mitochondrial (TXN2) (Bos taurus (Bovine)).